A 360-amino-acid chain; its full sequence is Phospho-N-acetylmuramoyl-pentapeptide-transferase (360 aa).

The next 10 helical transmembrane spans lie at 21-41, 73-93, 94-114, 132-152, 168-188, 199-219, 236-256, 263-283, 288-308, and 338-358; these read YLSF…LWMG, TMGG…WANL, SNPY…VGFV, WKYF…YAYG, VMPQ…VGTS, GLAI…AWAT, ASEL…FLWF, VFMG…IAVL, LVLV…ILQV, and VIVR…ATLK.

This sequence belongs to the glycosyltransferase 4 family. MraY subfamily. Mg(2+) is required as a cofactor.

The protein resides in the cell inner membrane. The enzyme catalyses UDP-N-acetyl-alpha-D-muramoyl-L-alanyl-gamma-D-glutamyl-meso-2,6-diaminopimeloyl-D-alanyl-D-alanine + di-trans,octa-cis-undecaprenyl phosphate = di-trans,octa-cis-undecaprenyl diphospho-N-acetyl-alpha-D-muramoyl-L-alanyl-D-glutamyl-meso-2,6-diaminopimeloyl-D-alanyl-D-alanine + UMP. It participates in cell wall biogenesis; peptidoglycan biosynthesis. In terms of biological role, catalyzes the initial step of the lipid cycle reactions in the biosynthesis of the cell wall peptidoglycan: transfers peptidoglycan precursor phospho-MurNAc-pentapeptide from UDP-MurNAc-pentapeptide onto the lipid carrier undecaprenyl phosphate, yielding undecaprenyl-pyrophosphoryl-MurNAc-pentapeptide, known as lipid I. In Vibrio vulnificus (strain CMCP6), this protein is Phospho-N-acetylmuramoyl-pentapeptide-transferase.